Consider the following 100-residue polypeptide: NAD(P)H-quinone oxidoreductase subunit 4L, chloroplastic (100 aa).

3 helical membrane-spanning segments follow: residues 1–21 (MIEN…YGLI), 27–47 (IKVL…LVAF), and 61–81 (FAVF…AIVF).

Belongs to the complex I subunit 4L family. In terms of assembly, NDH is composed of at least 16 different subunits, 5 of which are encoded in the nucleus.

It localises to the plastid. It is found in the chloroplast thylakoid membrane. It catalyses the reaction a plastoquinone + NADH + (n+1) H(+)(in) = a plastoquinol + NAD(+) + n H(+)(out). The catalysed reaction is a plastoquinone + NADPH + (n+1) H(+)(in) = a plastoquinol + NADP(+) + n H(+)(out). NDH shuttles electrons from NAD(P)H:plastoquinone, via FMN and iron-sulfur (Fe-S) centers, to quinones in the photosynthetic chain and possibly in a chloroplast respiratory chain. The immediate electron acceptor for the enzyme in this species is believed to be plastoquinone. Couples the redox reaction to proton translocation, and thus conserves the redox energy in a proton gradient. The protein is NAD(P)H-quinone oxidoreductase subunit 4L, chloroplastic of Chaetosphaeridium globosum (Charophycean green alga).